A 364-amino-acid chain; its full sequence is Natterin-3 (364 aa).

The signal sequence occupies residues 1 to 18 (MKLSVLVVTLLAVSWTSA). Residues 19–42 (QPETFSIQTKEANMNPEPANIRVA) constitute a propeptide that is removed on maturation.

It belongs to the natterin family. Contains 4 disulfide bonds. As to expression, expressed by the venom gland.

The protein resides in the secreted. With respect to regulation, inhibited by tissue-kallikrein inhibitor TKI and trasylol. Plasma kallikrein inhibitor PKSI527 and classical inhibitors of serine-, metallo-, thiol- or aspartate-peptidases evokes a minor inhibition of the peptide digestion. Functionally, shows nociceptive, edema-inducing and kininogenase activity with release of kallidin from low molecular weight kininogen. The cleavage occurs at Met-Lys bonds. This Thalassophryne nattereri (Copper Joe toadfish) protein is Natterin-3.